Here is a 309-residue protein sequence, read N- to C-terminus: tRNA pseudouridine synthase B (309 aa).

Residue aspartate 39 is the Nucleophile of the active site.

Belongs to the pseudouridine synthase TruB family. Type 1 subfamily.

The enzyme catalyses uridine(55) in tRNA = pseudouridine(55) in tRNA. Functionally, responsible for synthesis of pseudouridine from uracil-55 in the psi GC loop of transfer RNAs. In Bacillus pumilus (strain SAFR-032), this protein is tRNA pseudouridine synthase B.